The chain runs to 489 residues: Glutamyl-tRNA(Gln) amidotransferase subunit A (489 aa).

Residues lysine 78 and serine 153 each act as charge relay system in the active site. The active-site Acyl-ester intermediate is serine 177.

The protein belongs to the amidase family. GatA subfamily. As to quaternary structure, heterotrimer of A, B and C subunits.

The enzyme catalyses L-glutamyl-tRNA(Gln) + L-glutamine + ATP + H2O = L-glutaminyl-tRNA(Gln) + L-glutamate + ADP + phosphate + H(+). Allows the formation of correctly charged Gln-tRNA(Gln) through the transamidation of misacylated Glu-tRNA(Gln) in organisms which lack glutaminyl-tRNA synthetase. The reaction takes place in the presence of glutamine and ATP through an activated gamma-phospho-Glu-tRNA(Gln). The protein is Glutamyl-tRNA(Gln) amidotransferase subunit A of Enterococcus faecalis (strain ATCC 700802 / V583).